A 326-amino-acid chain; its full sequence is Cyclin-dependent kinase 6 (326 aa).

At Met1 the chain carries N-acetylmethionine. Residues Tyr13 and Tyr24 each carry the phosphotyrosine modification. One can recognise a Protein kinase domain in the interval 13–300 (YECVAEIGEG…AYSALSHPYF (288 aa)). ATP contacts are provided by residues 19 to 27 (IGEGAYGKV) and Lys43. Phosphothreonine occurs at positions 49 and 70. Residue Asp145 is the Proton acceptor of the active site. Thr177 carries the phosphothreonine modification. Lys264 is modified (N6-acetyllysine). Residue Thr325 is modified to Phosphothreonine.

This sequence belongs to the protein kinase superfamily. CMGC Ser/Thr protein kinase family. CDC2/CDKX subfamily. As to quaternary structure, interaction with D-type G1 cyclins. Cyclin binding promotes enzyme activation by phosphorylation at Thr-177. Binds to RUNX1, CDKN2D, FBXO7 and CDKN2C/p18-INK4c. Forms a cytoplasmic complex with Hsp90/HSP90AB1 and CDC37. FBXO7-binding promotes D-type cyclin binding. Interacts with Kaposi's sarcoma herpesvirus (KSHV) V-cyclin and herpesvirus saimiri (V-cyclin/ECLF2); the CDK6/V-cyclin complex phosphorylates NPM1 and thus lead to viral reactivation by reducing viral LANA levels. Post-translationally, thr-177 phosphorylation and Tyr-24 dephosphorylation promotes kinase activity. In terms of tissue distribution, expressed ubiquitously. Accumulates in squamous cell carcinomas, proliferating hematopoietic progenitor cells, beta-cells of pancreatic islets of Langerhans, and neuroblastomas. Reduced levels in differentiating cells.

Its subcellular location is the cytoplasm. The protein localises to the nucleus. The protein resides in the cell projection. It is found in the ruffle. It localises to the cytoskeleton. Its subcellular location is the microtubule organizing center. The protein localises to the centrosome. It carries out the reaction L-seryl-[protein] + ATP = O-phospho-L-seryl-[protein] + ADP + H(+). It catalyses the reaction L-threonyl-[protein] + ATP = O-phospho-L-threonyl-[protein] + ADP + H(+). Its activity is regulated as follows. Inhibited by INK4 proteins (CDKN2C/p18-INK4c), aminopurvalanol, PD0332991, 4-(Pyrazol-4-yl)-pyrimidines and fisetin, a flavonol inhibitor. Activated by Thr-177 phosphorylation and Tyr-24 dephosphorylation. Stimulated by cyclin from herpesvirus saimiri (V-cyclin/ECLF2). Rapidly down-regulated prior to cell differentiation (e.g. erythroid and osteoblast). Functionally, serine/threonine-protein kinase involved in the control of the cell cycle and differentiation; promotes G1/S transition. Phosphorylates pRB/RB1 and NPM1. Interacts with D-type G1 cyclins during interphase at G1 to form a pRB/RB1 kinase and controls the entrance into the cell cycle. Involved in initiation and maintenance of cell cycle exit during cell differentiation; prevents cell proliferation and negatively regulates cell differentiation, but is required for the proliferation of specific cell types (e.g. erythroid and hematopoietic cells). Essential for cell proliferation within the dentate gyrus of the hippocampus and the subventricular zone of the lateral ventricles. Required during thymocyte development. Promotes the production of newborn neurons, probably by modulating G1 length. Promotes, at least in astrocytes, changes in patterns of gene expression, changes in the actin cytoskeleton including loss of stress fibers, and enhanced motility during cell differentiation. Prevents myeloid differentiation by interfering with RUNX1 and reducing its transcription transactivation activity, but promotes proliferation of normal myeloid progenitors. Delays senescence. Promotes the proliferation of beta-cells in pancreatic islets of Langerhans. May play a role in the centrosome organization during the cell cycle phases. The protein is Cyclin-dependent kinase 6 (CDK6) of Homo sapiens (Human).